The chain runs to 411 residues: Pyridinium-3,5-bisthiocarboxylic acid mononucleotide nickel insertion protein (411 aa).

Belongs to the LarC family.

The enzyme catalyses Ni(II)-pyridinium-3,5-bisthiocarboxylate mononucleotide = pyridinium-3,5-bisthiocarboxylate mononucleotide + Ni(2+). In terms of biological role, involved in the biosynthesis of a nickel-pincer cofactor ((SCS)Ni(II) pincer complex). Binds Ni(2+), and functions in nickel delivery to pyridinium-3,5-bisthiocarboxylic acid mononucleotide (P2TMN), to form the mature cofactor. Is thus probably required for the activation of nickel-pincer cofactor-dependent enzymes. This is Pyridinium-3,5-bisthiocarboxylic acid mononucleotide nickel insertion protein from Geobacillus kaustophilus (strain HTA426).